The sequence spans 351 residues: Dihydroorotate dehydrogenase (quinone) (351 aa).

Residues 67-71 (AGFDK) and threonine 91 contribute to the FMN site. Position 71 (lysine 71) interacts with substrate. 116 to 120 (NAMGF) provides a ligand contact to substrate. 2 residues coordinate FMN: asparagine 145 and asparagine 178. Asparagine 178 is a substrate binding site. The Nucleophile role is filled by serine 181. Substrate is bound at residue asparagine 183. Lysine 214 and threonine 242 together coordinate FMN. Residue 243 to 244 (NT) coordinates substrate. Residues glycine 262, glycine 291, and 312–313 (YS) contribute to the FMN site.

The protein belongs to the dihydroorotate dehydrogenase family. Type 2 subfamily. In terms of assembly, monomer. FMN serves as cofactor.

It is found in the cell membrane. It catalyses the reaction (S)-dihydroorotate + a quinone = orotate + a quinol. It functions in the pathway pyrimidine metabolism; UMP biosynthesis via de novo pathway; orotate from (S)-dihydroorotate (quinone route): step 1/1. Catalyzes the conversion of dihydroorotate to orotate with quinone as electron acceptor. This Helicobacter pylori (strain G27) protein is Dihydroorotate dehydrogenase (quinone).